A 427-amino-acid polypeptide reads, in one-letter code: 3-phosphoshikimate 1-carboxyvinyltransferase (427 aa).

The 3-phosphoshikimate site is built by Lys-22, Ser-23, and Arg-27. Lys-22 serves as a coordination point for phosphoenolpyruvate. Gly-96 and Arg-124 together coordinate phosphoenolpyruvate. Residues Ser-169, Ser-170, Gln-171, Ser-197, Asp-313, Asn-336, and Lys-340 each coordinate 3-phosphoshikimate. Gln-171 contributes to the phosphoenolpyruvate binding site. Asp-313 functions as the Proton acceptor in the catalytic mechanism. Residues Arg-344, Arg-386, and Lys-411 each contribute to the phosphoenolpyruvate site.

The protein belongs to the EPSP synthase family. In terms of assembly, monomer.

The protein localises to the cytoplasm. The enzyme catalyses 3-phosphoshikimate + phosphoenolpyruvate = 5-O-(1-carboxyvinyl)-3-phosphoshikimate + phosphate. It functions in the pathway metabolic intermediate biosynthesis; chorismate biosynthesis; chorismate from D-erythrose 4-phosphate and phosphoenolpyruvate: step 6/7. In terms of biological role, catalyzes the transfer of the enolpyruvyl moiety of phosphoenolpyruvate (PEP) to the 5-hydroxyl of shikimate-3-phosphate (S3P) to produce enolpyruvyl shikimate-3-phosphate and inorganic phosphate. The sequence is that of 3-phosphoshikimate 1-carboxyvinyltransferase from Escherichia coli O127:H6 (strain E2348/69 / EPEC).